The following is a 102-amino-acid chain: Small ribosomal subunit protein uS10 (102 aa).

It belongs to the universal ribosomal protein uS10 family. As to quaternary structure, part of the 30S ribosomal subunit.

Functionally, involved in the binding of tRNA to the ribosomes. The sequence is that of Small ribosomal subunit protein uS10 from Cereibacter sphaeroides (strain ATCC 17029 / ATH 2.4.9) (Rhodobacter sphaeroides).